The sequence spans 133 residues: Large ribosomal subunit protein uL16c (133 aa).

The protein belongs to the universal ribosomal protein uL16 family. Part of the 50S ribosomal subunit.

It localises to the plastid. The sequence is that of Large ribosomal subunit protein uL16c from Euglena longa (Euglenophycean alga).